The primary structure comprises 315 residues: Putative HTH-type transcriptional regulatory protein PF1851 (315 aa).

Residues 131 to 189 (LRELREKYGYSTTELAEMLGVSRKSVQRYEKGEGMVSIDVAIRLEEIFDEPLVKPIDIF) form the HTH cro/C1-type domain. Positions 142–161 (TTELAEMLGVSRKSVQRYEK) form a DNA-binding region, H-T-H motif.

The sequence is that of Putative HTH-type transcriptional regulatory protein PF1851 from Pyrococcus furiosus (strain ATCC 43587 / DSM 3638 / JCM 8422 / Vc1).